Consider the following 260-residue polypeptide: Proteasome subunit alpha (260 aa).

It belongs to the peptidase T1A family. The 20S proteasome core is composed of 14 alpha and 14 beta subunits that assemble into four stacked heptameric rings, resulting in a barrel-shaped structure. The two inner rings, each composed of seven catalytic beta subunits, are sandwiched by two outer rings, each composed of seven alpha subunits. The catalytic chamber with the active sites is on the inside of the barrel. Has a gated structure, the ends of the cylinder being occluded by the N-termini of the alpha-subunits. Is capped at one or both ends by the proteasome regulatory ATPase, PAN.

The protein localises to the cytoplasm. Its activity is regulated as follows. The formation of the proteasomal ATPase PAN-20S proteasome complex, via the docking of the C-termini of PAN into the intersubunit pockets in the alpha-rings, triggers opening of the gate for substrate entry. Interconversion between the open-gate and close-gate conformations leads to a dynamic regulation of the 20S proteasome proteolysis activity. Component of the proteasome core, a large protease complex with broad specificity involved in protein degradation. This is Proteasome subunit alpha from Thermococcus kodakarensis (strain ATCC BAA-918 / JCM 12380 / KOD1) (Pyrococcus kodakaraensis (strain KOD1)).